A 240-amino-acid polypeptide reads, in one-letter code: Urease accessory protein UreF (240 aa).

Belongs to the UreF family. UreD, UreF and UreG form a complex that acts as a GTP-hydrolysis-dependent molecular chaperone, activating the urease apoprotein by helping to assemble the nickel containing metallocenter of UreC. The UreE protein probably delivers the nickel.

Its subcellular location is the cytoplasm. Required for maturation of urease via the functional incorporation of the urease nickel metallocenter. The sequence is that of Urease accessory protein UreF from Bradyrhizobium sp. (strain BTAi1 / ATCC BAA-1182).